The following is a 1518-amino-acid chain: Hormone receptor 4 (1518 aa).

5 disordered regions span residues 30 to 50 (RCSS…DLLA), 145 to 327 (TSST…KLSE), 380 to 587 (PSRI…QPQA), 672 to 820 (VGVG…SSVA), and 887 to 913 (SSNS…EPTD). Positions 34 to 46 (DGESIADTSTSSP) are enriched in polar residues. 2 stretches are compositionally biased toward low complexity: residues 145–189 (TSST…SSSG) and 208–219 (SSSSAISAAAAS). Residues 238 to 260 (EGGGPAGDGSGATGGGNTSGGST) are compositionally biased toward gly residues. Low complexity predominate over residues 291–323 (STTTTTGRPTLTPTNGVLSSASAGTGISTGSSA). The segment covering 400–429 (QRERERERDRERDRERERERDRDREREREQ) has biased composition (basic and acidic residues). Composition is skewed to polar residues over residues 430–451 (SISS…QLSH) and 475–489 (RKSS…SQSM). 4 stretches are compositionally biased toward low complexity: residues 490 to 529 (QHLT…PHSL), 546 to 586 (HHQQ…QQPQ), 681 to 705 (GSVQ…QTPS), and 738 to 799 (GQSH…PSSS). Composition is skewed to gly residues over residues 800–812 (SGGG…GVGG) and 892–902 (GLGGVGGGMGG). Positions 918–993 (PLVCMICEDK…QGMVLQAVRE (76 aa)) form a DNA-binding region, nuclear receptor. 2 consecutive NR C4-type zinc fingers follow at residues 921 to 941 (CMIC…CEGC) and 957 to 976 (CVAD…CQYC). Disordered stretches follow at residues 1015 to 1101 (KHKK…AAVA), 1142 to 1210 (LLQA…LPPH), and 1341 to 1371 (KRRG…STPI). Residues 1021–1060 (QKQQQQAAQQQQQQAAAQQQHQQQQQHQQHQQHQQQQLHS) show a composition bias toward low complexity. A compositionally biased stretch (basic residues) spans 1061–1077 (PLHHHHHQGHQSHHAQQ). Composition is skewed to low complexity over residues 1078–1101 (QHHP…AAVA) and 1144–1193 (QAPP…HHQQ). Over residues 1194–1205 (QGGGGGGAGGGA) the composition is skewed to gly residues. The region spanning 1250–1518 (HALGMIQTLI…PFVLNSASIR (269 aa)) is the NR LBD domain. The span at 1351-1368 (HGSPASTPLSTPTGTPLS) shows a compositional bias: low complexity.

The protein belongs to the nuclear hormone receptor family. NR1 subfamily. As to expression, during L2 and L3 stages, strong constitutive expression is seen in the ring gland. Lower expression is detected in specific neurons of the central nervous system (CNS) (at protein level).

The protein resides in the nucleus. Coordinates growth and maturation by mediating endocrine responses to the attainment of critical weight during larval development. Plays a central role in the genetic cascades triggered by the steroid hormone ecdysone at the onset of metamorphosis, acting as both a repressor of the early ecdysone-induced regulatory genes and an inducer of the ftz-f1 midprepupal competence factor. This is Hormone receptor 4 (Hr4) from Drosophila melanogaster (Fruit fly).